Here is a 269-residue protein sequence, read N- to C-terminus: MDKKEKRPTVLFFDSGVGGFSVYREAKKLLPNWHYLYCFDNAGFPYSERKEESIIHRTLAACQLINQRYPLDAMVIACNTASTVVLPPLRAAFDIPIIGTVPAIKPASEITKTKHIGLLATKGTVKRHYIDELIDKFAQDCIVERLGTTKLVEIAEQKIRGHSVDLISLKDELSSWAGMADLDTLVLGCTHFPLIKDEIQLCLPQVKYFMEPSAAIAKRIKYLLDDKNLQAQNEKYNQMFCTAHFPEESQFKKALHLWGFESLEVIKID.

Substrate is bound by residues 14-15 (DS) and 46-47 (YS). Cysteine 78 serves as the catalytic Proton donor/acceptor. Substrate is bound at residue 79–80 (NT). Cysteine 189 serves as the catalytic Proton donor/acceptor. 190–191 (TH) is a binding site for substrate.

The protein belongs to the aspartate/glutamate racemases family.

It carries out the reaction L-glutamate = D-glutamate. It participates in cell wall biogenesis; peptidoglycan biosynthesis. Provides the (R)-glutamate required for cell wall biosynthesis. In Haemophilus influenzae (strain ATCC 51907 / DSM 11121 / KW20 / Rd), this protein is Glutamate racemase.